Consider the following 409-residue polypeptide: MLNSRVVDTPPRTSRRIKLSLMGPAFIAAIGYIDPGNFATNIQAGASFGYTLLWVVVWANFMAMLIQLLSAKLGIATGKNLAEHIRDRFPRPAVWAYWVQAEIIAMATDLAEFIGAAIGFKLLLGVTLLEGAVLTGIATFLILMLQKRGQKPLELVIGGLLLFVAAAYIVELVFSRPEIAALGRGMLIPDLPNRDAVFLAAGVLGATIMPHVIYLHSSLTQTAGENSKADRYASTKLDVAIAMTIAGFVNLAMMATAAAAFHFNGYGSIAEIEQAYLTLQPLLGNAAATIFGLSLVAAGLSSTVVGTLAGQVVMQGFVRFYIPIWVRRTVTMLPSFIVILMGMDATRILVMSQVLLSFGIALALVPLLAFTGNKELMGDMVNSKLIQILGKLIVLVVIGLNAYLLVSLI.

11 helical membrane-spanning segments follow: residues 19-39 (LSLM…GNFA), 46-66 (ASFG…AMLI), 98-118 (WVQA…GAAI), 122-142 (LLLG…TFLI), 155-175 (LVIG…LVFS), 196-216 (AVFL…IYLH), 241-261 (IAMT…AAAF), 290-310 (IFGL…TLAG), 320-340 (FYIP…IVIL), 348-368 (ILVM…VPLL), and 388-408 (ILGK…LVSL).

The protein belongs to the NRAMP family.

It is found in the cell inner membrane. In terms of biological role, h(+)-stimulated, divalent metal cation uptake system. This is Divalent metal cation transporter MntH from Yersinia enterocolitica serotype O:8 / biotype 1B (strain NCTC 13174 / 8081).